The primary structure comprises 692 residues: Elongation factor G (692 aa).

A tr-type G domain is found at 8 to 282 (EKTRNIGIMA…AVVEYMPAPT (275 aa)). GTP-binding positions include 17 to 24 (AHIDAGKT), 81 to 85 (DTPGH), and 135 to 138 (NKMD). Residues 285–304 (PNIKGVHPETGEADERHSSD) are disordered. The span at 290-304 (VHPETGEADERHSSD) shows a compositional bias: basic and acidic residues.

This sequence belongs to the TRAFAC class translation factor GTPase superfamily. Classic translation factor GTPase family. EF-G/EF-2 subfamily.

Its subcellular location is the cytoplasm. Catalyzes the GTP-dependent ribosomal translocation step during translation elongation. During this step, the ribosome changes from the pre-translocational (PRE) to the post-translocational (POST) state as the newly formed A-site-bound peptidyl-tRNA and P-site-bound deacylated tRNA move to the P and E sites, respectively. Catalyzes the coordinated movement of the two tRNA molecules, the mRNA and conformational changes in the ribosome. This Desulfitobacterium hafniense (strain Y51) protein is Elongation factor G.